A 79-amino-acid polypeptide reads, in one-letter code: MGGFTSIWHWVIVLLVIVLLFGAKKIPELAKGLGSGIKNFKKAVKDDEEEAKNELKTLDAQATQTKVHETSEIKSKQES.

Residues 1–21 (MGGFTSIWHWVIVLLVIVLLF) traverse the membrane as a helical segment. A disordered region spans residues 54-79 (ELKTLDAQATQTKVHETSEIKSKQES). The segment covering 66-79 (KVHETSEIKSKQES) has biased composition (basic and acidic residues).

It belongs to the TatA/E family. In terms of assembly, the Tat system comprises two distinct complexes: a TatABC complex, containing multiple copies of TatA, TatB and TatC subunits, and a separate TatA complex, containing only TatA subunits. Substrates initially bind to the TatABC complex, which probably triggers association of the separate TatA complex to form the active translocon.

Its subcellular location is the cell inner membrane. In terms of biological role, part of the twin-arginine translocation (Tat) system that transports large folded proteins containing a characteristic twin-arginine motif in their signal peptide across membranes. TatA could form the protein-conducting channel of the Tat system. In Helicobacter pylori (strain J99 / ATCC 700824) (Campylobacter pylori J99), this protein is Sec-independent protein translocase protein TatA.